The following is a 406-amino-acid chain: Testis-specific Y-encoded-like protein 5 (406 aa).

The segment covering Met1 to Val25 has biased composition (basic residues). 3 disordered regions span residues Met1 to Leu67, Ile132 to Ala164, and Arg382 to Asn406. Over residues Ala27–Pro38 the composition is skewed to basic and acidic residues. The segment covering Ala49–Ala62 has biased composition (low complexity). Over residues Arg382–Gly392 the composition is skewed to basic and acidic residues.

Belongs to the nucleosome assembly protein (NAP) family. Interacts with USP7.

Functionally, involved in modulation of cell growth and cellular response to gamma radiation probably via regulation of the Akt signaling pathway. Involved in regulation of p53/TP53. Suppresses p53/TP53 protein levels and promotes its ubiquitination; the function is dependent on USP7 and independent on MDM2. Proposed to displace p53/TP53 from interaction with USP7. This Mus musculus (Mouse) protein is Testis-specific Y-encoded-like protein 5 (Tspyl5).